We begin with the raw amino-acid sequence, 359 residues long: Phosphoserine aminotransferase (359 aa).

Residue Arg42 participates in L-glutamate binding. Residues 76-77, Trp102, Thr152, Asp171, and Gln194 each bind pyridoxal 5'-phosphate; that span reads AS. Lys195 carries the N6-(pyridoxal phosphate)lysine modification. 236–237 lines the pyridoxal 5'-phosphate pocket; the sequence is NT.

Belongs to the class-V pyridoxal-phosphate-dependent aminotransferase family. SerC subfamily. In terms of assembly, homodimer. It depends on pyridoxal 5'-phosphate as a cofactor.

The protein localises to the cytoplasm. The catalysed reaction is O-phospho-L-serine + 2-oxoglutarate = 3-phosphooxypyruvate + L-glutamate. The enzyme catalyses 4-(phosphooxy)-L-threonine + 2-oxoglutarate = (R)-3-hydroxy-2-oxo-4-phosphooxybutanoate + L-glutamate. It participates in amino-acid biosynthesis; L-serine biosynthesis; L-serine from 3-phospho-D-glycerate: step 2/3. It functions in the pathway cofactor biosynthesis; pyridoxine 5'-phosphate biosynthesis; pyridoxine 5'-phosphate from D-erythrose 4-phosphate: step 3/5. Its function is as follows. Catalyzes the reversible conversion of 3-phosphohydroxypyruvate to phosphoserine and of 3-hydroxy-2-oxo-4-phosphonooxybutanoate to phosphohydroxythreonine. The polypeptide is Phosphoserine aminotransferase (Vesicomyosocius okutanii subsp. Calyptogena okutanii (strain HA)).